The sequence spans 403 residues: MFVASERKMRAHQVLTFLLLFVITSVASENASTSRGCGLDLLPQYVSLCDLDAIWGIVVEAVAGAGALITLLLMLILLVRLPFIKEKEKKSPVGLHFLFLLGTLGLFGLTFAFIIQEDETICSVRRFLWGVLFALCFSCLLSQAWRVRRLVRHGTGPAGWQLVGLALCLMLVQVIIAVEWLVLTVLRDTRPACAYEPMDFVMALIYDMVLLVVTLGLALFTLCGKFKRWKLNGAFLLITAFLSVLIWVAWMTMYLFGNVKLQQGDAWNDPTLAITLAASGWVFVIFHAIPEIHCTLLPALQENTPNYFDTSQPRMRETAFEEDVQLPRAYMENKAFSMDEHNAALRTAGFPNGSLGKRPSGSLGKRPSAPFRSNVYQPTEMAVVLNGGTIPTAPPSHTGRHLW.

The first 28 residues, 1–28 (MFVASERKMRAHQVLTFLLLFVITSVAS), serve as a signal peptide directing secretion. Residues 29–56 (ENASTSRGCGLDLLPQYVSLCDLDAIWG) are Extracellular-facing. Asn30 carries an N-linked (GlcNAc...) asparagine glycan. The chain crosses the membrane as a helical span at residues 57–77 (IVVEAVAGAGALITLLLMLIL). The Cytoplasmic segment spans residues 78–94 (LVRLPFIKEKEKKSPVG). A helical transmembrane segment spans residues 95–115 (LHFLFLLGTLGLFGLTFAFII). At 116–126 (QEDETICSVRR) the chain is on the extracellular side. Residues 127 to 147 (FLWGVLFALCFSCLLSQAWRV) form a helical membrane-spanning segment. The Cytoplasmic portion of the chain corresponds to 148-162 (RRLVRHGTGPAGWQL). The chain crosses the membrane as a helical span at residues 163-183 (VGLALCLMLVQVIIAVEWLVL). Topologically, residues 184 to 199 (TVLRDTRPACAYEPMD) are extracellular. The chain crosses the membrane as a helical span at residues 200 to 220 (FVMALIYDMVLLVVTLGLALF). At 221-234 (TLCGKFKRWKLNGA) the chain is on the cytoplasmic side. Residues 235–255 (FLLITAFLSVLIWVAWMTMYL) form a helical membrane-spanning segment. Residues 256–271 (FGNVKLQQGDAWNDPT) lie on the Extracellular side of the membrane. Residues 272 to 292 (LAITLAASGWVFVIFHAIPEI) traverse the membrane as a helical segment. Residues 293 to 403 (HCTLLPALQE…PPSHTGRHLW (111 aa)) lie on the Cytoplasmic side of the membrane. Positions 349-371 (GFPNGSLGKRPSGSLGKRPSAPF) are disordered. Residue Ser354 is modified to Phosphoserine.

This sequence belongs to the G-protein coupled receptor 3 family. As to expression, expression is high in kidney, pancreas, and testis, medium in brain, heart, prostate, small intestine, and spleen, low in liver, placenta, skeletal muscle, colon, ovary, and thymus, and not detectable in lung and peripheral leukocyte. According to PubMed:10945465, highly expressed in most brain areas examined, with the highest levels observed in corpus callosum, caudate nucleus, putamen, substantia nigra, thalamus, hippocampus, and spinal cord as well as in dorsal root ganglia (DRG). Expressed in glia limitans, ependymal cells, astrocyte cell bodies, the perivascular region in astrocyte endfeet, but not in neurons. In the periphery, expression levels are relatively low, compared to the CNS, with the strongest expression detected in pancreas, testis, uterus, and stomach.

It localises to the cell membrane. The protein resides in the cytoplasmic vesicle membrane. In terms of biological role, G-protein coupled receptor involved in the regulation of cell volume. This chain is G-protein coupled receptor family C group 5 member B (GPRC5B), found in Homo sapiens (Human).